We begin with the raw amino-acid sequence, 452 residues long: Phosphoglucosamine mutase (452 aa).

The active-site Phosphoserine intermediate is the Ser-104. Positions 104, 244, 246, and 248 each coordinate Mg(2+). Ser-104 is modified (phosphoserine).

Belongs to the phosphohexose mutase family. Mg(2+) serves as cofactor. Activated by phosphorylation.

It catalyses the reaction alpha-D-glucosamine 1-phosphate = D-glucosamine 6-phosphate. In terms of biological role, catalyzes the conversion of glucosamine-6-phosphate to glucosamine-1-phosphate. The polypeptide is Phosphoglucosamine mutase (Pediococcus pentosaceus (strain ATCC 25745 / CCUG 21536 / LMG 10740 / 183-1w)).